We begin with the raw amino-acid sequence, 135 residues long: PTS system sorbose-specific EIIA component (135 aa).

Positions 1–131 (MVHAIFCAHG…CVVWQQPETV (131 aa)) constitute a PTS EIIA type-4 domain. The active-site Tele-phosphohistidine intermediate is H9. The residue at position 9 (H9) is a Phosphohistidine; by HPr.

The protein localises to the cytoplasm. Functionally, the phosphoenolpyruvate-dependent sugar phosphotransferase system (PTS), a major carbohydrate active transport system, catalyzes the phosphorylation of incoming sugar substrates concomitant with their translocation across the cell membrane. The enzyme II SorABFM PTS system is involved in L-sorbose transport. This Klebsiella pneumoniae protein is PTS system sorbose-specific EIIA component.